Here is a 431-residue protein sequence, read N- to C-terminus: Isochorismate synthase MenF (431 aa).

Catalysis depends on lysine 190, which acts as the Proton acceptor. Glutamate 240 (proton donor) is an active-site residue. 2 residues coordinate Mg(2+): glutamate 284 and glutamate 416.

It belongs to the isochorismate synthase family. As to quaternary structure, homodimer. Requires Mg(2+) as cofactor.

It catalyses the reaction chorismate = isochorismate. Its pathway is quinol/quinone metabolism; 1,4-dihydroxy-2-naphthoate biosynthesis; 1,4-dihydroxy-2-naphthoate from chorismate: step 1/7. It participates in quinol/quinone metabolism; menaquinone biosynthesis. Its function is as follows. Catalyzes the conversion of chorismate to isochorismate. Can also catalyze the reverse reaction, but with a lower efficiency. This is Isochorismate synthase MenF from Escherichia coli (strain K12).